The sequence spans 265 residues: MSRIQSTLAALAAKNKKGLIPFITAGDPAPELTVPLMHALVAGGADILELGVPFSDPMAEGPVIQRACERALASGVSMHDVLGFVSEFRKTNNSTPVVLMGYANPIERMGQTKFILAAKAAGVDGTIVVDYPPEECEEFAATLKENDMDPIFLLSPTSTEERIQQVAKFGSGFSYYVSLKGVTGAANIDTKEVAERIAAIRKYVKLPIGVGFGIRDAATAKAVAQVSDAVVIGSRIIQELENSPREQAVERVQTFIAGIRKALDE.

Catalysis depends on proton acceptor residues Glu-49 and Glu-60.

It belongs to the TrpA family. Tetramer of two alpha and two beta chains.

The enzyme catalyses (1S,2R)-1-C-(indol-3-yl)glycerol 3-phosphate + L-serine = D-glyceraldehyde 3-phosphate + L-tryptophan + H2O. Its pathway is amino-acid biosynthesis; L-tryptophan biosynthesis; L-tryptophan from chorismate: step 5/5. Functionally, the alpha subunit is responsible for the aldol cleavage of indoleglycerol phosphate to indole and glyceraldehyde 3-phosphate. This is Tryptophan synthase alpha chain from Janthinobacterium sp. (strain Marseille) (Minibacterium massiliensis).